The following is a 330-amino-acid chain: Cyclic AMP receptor-like protein E (330 aa).

Topologically, residues 1 to 10 (MLSLSSYVLN) are extracellular. The helical transmembrane segment at 11–31 (LVGSILCLIGCLFIIGHFFWI) threads the bilayer. The Cytoplasmic portion of the chain corresponds to 32–40 (PLLRTSLSR). The helical transmembrane segment at 41 to 61 (IIIYPTFILLLYDMVSFPSFI) threads the bilayer. Over 62 to 85 (SKTADLYIERSTIICNFQEAIIQY) the chain is Extracellular. The helical transmembrane segment at 86–106 (LILSNFIWSVCISVNLLYLCF) threads the bilayer. Residues 107–116 (SPNKNLKKNE) lie on the Cytoplasmic side of the membrane. The chain crosses the membrane as a helical span at residues 117 to 137 (LLYHLCSWGIPLIVVVITKIP). The Extracellular segment spans residues 138-156 (NMISDNGNQCRFKSPNYIK). The helical transmembrane segment at 157–177 (FYLETILFIAFMLFNFIVAFI) threads the bilayer. Topologically, residues 178–213 (TIKHIISGNLRESETTTTSVLFVNEKKITTKKIVWR) are cytoplasmic. A helical membrane pass occupies residues 214-234 (LLLYPSILSICYIMTLVLSIY). At 235–274 (QFSTESYGSGGAYANSINNKRNDKNTESGNSNNNNNSYIE) the chain is on the extracellular side. N-linked (GlcNAc...) asparagine glycosylation occurs at Asn269. Residues 275–295 (ILLYISKAIFLLQGFFNALVY) traverse the membrane as a helical segment. At 296–330 (LRSSKLRDRYKKITIFRKIFWRDEADYQSINDGFN) the chain is on the cytoplasmic side.

This sequence belongs to the G-protein coupled receptor 5 family.

It is found in the membrane. Functionally, receptor for cAMP. This chain is Cyclic AMP receptor-like protein E (crlE), found in Dictyostelium discoideum (Social amoeba).